The sequence spans 220 residues: uncharacterized protein (220 aa).

It belongs to the DadA oxidoreductase family. Requires FAD as cofactor.

This is an uncharacterized protein from Halorhodospira halophila (Ectothiorhodospira halophila).